We begin with the raw amino-acid sequence, 447 residues long: 3-phosphoshikimate 1-carboxyvinyltransferase 2 (447 aa).

3-phosphoshikimate contacts are provided by K40, S41, and R45. K40 lines the phosphoenolpyruvate pocket. Phosphoenolpyruvate-binding residues include G109 and R138. 3-phosphoshikimate-binding residues include S184, S185, Q186, D329, and H356. Position 186 (Q186) interacts with phosphoenolpyruvate. Catalysis depends on D329, which acts as the Proton acceptor. 3 residues coordinate phosphoenolpyruvate: R360, R403, and K428.

The protein belongs to the EPSP synthase family. As to quaternary structure, monomer.

It localises to the cytoplasm. It catalyses the reaction 3-phosphoshikimate + phosphoenolpyruvate = 5-O-(1-carboxyvinyl)-3-phosphoshikimate + phosphate. The protein operates within metabolic intermediate biosynthesis; chorismate biosynthesis; chorismate from D-erythrose 4-phosphate and phosphoenolpyruvate: step 6/7. In terms of biological role, catalyzes the transfer of the enolpyruvyl moiety of phosphoenolpyruvate (PEP) to the 5-hydroxyl of shikimate-3-phosphate (S3P) to produce enolpyruvyl shikimate-3-phosphate and inorganic phosphate. This is 3-phosphoshikimate 1-carboxyvinyltransferase 2 from Halalkalibacterium halodurans (strain ATCC BAA-125 / DSM 18197 / FERM 7344 / JCM 9153 / C-125) (Bacillus halodurans).